Reading from the N-terminus, the 445-residue chain is MSSTHPGRTIRSGATQNLSGTIRPAADKSISHRSVIFGALAEGETHVKGMLEGEDVLRTITAFRTMGISIERCNEGEYRIQGQGLDGLKEPDDVLDMGNSGTAMRLLCGLLASQPFHSILTGDHSLRSRPMGRVVQPLTKMGARIRGRDGGRLAPLAIEGTELVPITYNSPIASAQVKSAIILAGLNTAGETTIIEPAVSRDHTERMLIAFGAEVTRDGNQVTIEGWPNLQGQEIEVPADISAAAFPMVAALITPGSDIILENVGMNPTRTGILDLLLAMGGNIQRLNEREVGGEPVADLQVRYSQLQGIEIDPTVVPRAIDEFPVFFVAAALAQGQTLVQGAEELRVKESDRITAMANGLKALGAIIEERPDGALITGNPDGLAGGASVDSFTDHRIAMSLLVAGLRCKESVLVQRCDNINTSFPSFSQLMNSLGFQLEDVSHG.

Positions 1–20 (MSSTHPGRTIRSGATQNLSG) are enriched in polar residues. A disordered region spans residues 1–24 (MSSTHPGRTIRSGATQNLSGTIRP). 3 residues coordinate 3-phosphoshikimate: Lys28, Ser29, and Arg33. Lys28 contacts phosphoenolpyruvate. Residues Gly101 and Arg129 each contribute to the phosphoenolpyruvate site. Positions 174, 176, 322, and 349 each coordinate 3-phosphoshikimate. Position 176 (Gln176) interacts with phosphoenolpyruvate. Asp322 functions as the Proton acceptor in the catalytic mechanism. Phosphoenolpyruvate contacts are provided by Arg353 and Arg397.

It belongs to the EPSP synthase family. In terms of assembly, monomer.

The protein localises to the cytoplasm. It catalyses the reaction 3-phosphoshikimate + phosphoenolpyruvate = 5-O-(1-carboxyvinyl)-3-phosphoshikimate + phosphate. It participates in metabolic intermediate biosynthesis; chorismate biosynthesis; chorismate from D-erythrose 4-phosphate and phosphoenolpyruvate: step 6/7. Functionally, catalyzes the transfer of the enolpyruvyl moiety of phosphoenolpyruvate (PEP) to the 5-hydroxyl of shikimate-3-phosphate (S3P) to produce enolpyruvyl shikimate-3-phosphate and inorganic phosphate. This Magnetococcus marinus (strain ATCC BAA-1437 / JCM 17883 / MC-1) protein is 3-phosphoshikimate 1-carboxyvinyltransferase.